The primary structure comprises 171 residues: 3-hydroxydecanoyl-[acyl-carrier-protein] dehydratase (171 aa).

His70 is an active-site residue.

The protein belongs to the thioester dehydratase family. FabA subfamily. Homodimer.

The protein resides in the cytoplasm. The enzyme catalyses a (3R)-hydroxyacyl-[ACP] = a (2E)-enoyl-[ACP] + H2O. The catalysed reaction is (3R)-hydroxydecanoyl-[ACP] = (2E)-decenoyl-[ACP] + H2O. It carries out the reaction (2E)-decenoyl-[ACP] = (3Z)-decenoyl-[ACP]. It functions in the pathway lipid metabolism; fatty acid biosynthesis. In terms of biological role, necessary for the introduction of cis unsaturation into fatty acids. Catalyzes the dehydration of (3R)-3-hydroxydecanoyl-ACP to E-(2)-decenoyl-ACP and then its isomerization to Z-(3)-decenoyl-ACP. Can catalyze the dehydratase reaction for beta-hydroxyacyl-ACPs with saturated chain lengths up to 16:0, being most active on intermediate chain length. This Methylococcus capsulatus (strain ATCC 33009 / NCIMB 11132 / Bath) protein is 3-hydroxydecanoyl-[acyl-carrier-protein] dehydratase.